We begin with the raw amino-acid sequence, 415 residues long: Beta-2 adrenergic receptor (415 aa).

At 1-34 (MGQPANRSVFLLAPNGSHAPDQGDSQERSEAWVV) the chain is on the extracellular side. N-linked (GlcNAc...) asparagine glycans are attached at residues Asn-6 and Asn-15. The chain crosses the membrane as a helical span at residues 35-58 (GMGIVMSLIVLAIVFGNVLVITAI). Over 59-71 (ARFERLQTVTNYF) the chain is Cytoplasmic. A helical transmembrane segment spans residues 72-95 (ITSLACADLVMGLAVVPFGASHIL). Residues 96–106 (MKMWTFGNFWC) lie on the Extracellular side of the membrane. 2 disulfides stabilise this stretch: Cys-106/Cys-191 and Cys-184/Cys-190. A helical membrane pass occupies residues 107–129 (EFWTSIDVLCVTASIETLCVIAV). At 130–150 (DRYFAITSPFKYQSLLTKNKA) the chain is on the cytoplasmic side. Tyr-141 is modified (phosphotyrosine). The helical transmembrane segment at 151 to 174 (RVVILMVWIVSGLTSFLPIQMHWY) threads the bilayer. At 175-196 (RATHQEAINCYAKETCCDFFTN) the chain is on the extracellular side. The chain crosses the membrane as a helical span at residues 197 to 220 (QAYAIASSIVSFYLPLVVMVFVYS). Residues 221–274 (RVFQVAQRQLQKIDRSEGRFHAQNLSQVEQDGRSGHGHRRSSKFCLKEHKALKT) are Cytoplasmic-facing. Ser-246 is modified (phosphoserine). Residues Ser-261 and Ser-262 each carry the phosphoserine; by PKA modification. Cys-265 carries S-palmitoyl cysteine lipidation. A helical transmembrane segment spans residues 275–298 (LGIIMGTFTLCWLPFFIVNIVHVI). Topologically, residues 299-305 (QDNLIPK) are extracellular. The chain crosses the membrane as a helical span at residues 306–329 (EVYILLNWVGYVNSAFNPLIYCRS). At 330-415 (PDFRIAFQEL…RNCSTNDSLL (86 aa)) the chain is on the cytoplasmic side. Cys-341 is lipidated: S-palmitoyl cysteine. 2 positions are modified to phosphoserine; by PKA: Ser-345 and Ser-346. Position 355 is a phosphoserine; by BARK (Ser-355). The interval 379–415 (SELLCEDPPGTEDRQGTVPSDSVDSQGRNCSTNDSLL) is disordered. 2 positions are modified to 4-hydroxyproline: Pro-387 and Pro-397. Positions 395–415 (TVPSDSVDSQGRNCSTNDSLL) are enriched in polar residues. The PDZ-binding signature appears at 412–415 (DSLL).

It belongs to the G-protein coupled receptor 1 family. Adrenergic receptor subfamily. ADRB2 sub-subfamily. Binds NHERF1 and GPRASP1. Interacts with ARRB1 and ARRB2. Interacts with SRC. Interacts with USP20 and USP33. Interacts with VHL; the interaction, which is increased on hydroxylation of ADRB2, ubiquitinates ADRB2 leading to its degradation. Interacts with EGLN3; the interaction hydroxylates ADRB2 facilitating VHL-E3 ligase-mediated ubiquitination. Interacts (via PDZ-binding motif) with SNX27 (via PDZ domain); the interaction is required when endocytosed to prevent degradation in lysosomes and promote recycling to the plasma membrane. Interacts with CNIH4. Interacts with ARRDC3. Interacts with NEDD4. Interacts with MARCHF2. Post-translationally, palmitoylated; may reduce accessibility of Ser-345 and Ser-346 by anchoring Cys-341 to the plasma membrane. Agonist stimulation promotes depalmitoylation and further allows Ser-345 and Ser-346 phosphorylation. Phosphorylated by PKA and BARK upon agonist stimulation, which mediates homologous desensitization of the receptor. PKA-mediated phosphorylation seems to facilitate phosphorylation by BARK. In terms of processing, phosphorylation of Tyr-141 is induced by insulin and leads to supersensitization of the receptor. Post-translationally, polyubiquitinated. Agonist-induced ubiquitination leads to sort internalized receptors to the lysosomes for degradation. Deubiquitination by USP20 and USP33, leads to ADRB2 recycling and resensitization after prolonged agonist stimulation. USP20 and USP33 are constitutively associated and are dissociated immediately after agonist stimulation. Ubiquitination by the VHL-E3 ligase complex is oxygen-dependent. Hydroxylation by EGLN3 occurs only under normoxia and increases the interaction with VHL and the subsequent ubiquitination and degradation of ADRB2. In terms of processing, palmitoylated. Mainly palmitoylated at Cys-341. Palmitoylation may reduce accessibility of phosphorylation sites by anchoring the receptor to the plasma membrane. Agonist stimulation promotes depalmitoylation and further allows Ser-345 and Ser-346 phosphorylation. Also undergoes transient, ligand-induced palmitoylation at Cys-265 probably by ZDHHC9, ZDHHC14 and ZDHHC18 within the Golgi. Palmitoylation at Cys-265 requires phosphorylation by PKA and receptor internalization and stabilizes the receptor. Could be depalmitoylated by LYPLA1 at the plasma membrane.

Its subcellular location is the cell membrane. It localises to the early endosome. The protein localises to the golgi apparatus. In terms of biological role, beta-adrenergic receptors mediate the catecholamine-induced activation of adenylate cyclase through the action of G proteins. The beta-2-adrenergic receptor binds epinephrine with an approximately 30-fold greater affinity than it does norepinephrine. The chain is Beta-2 adrenergic receptor (ADRB2) from Canis lupus familiaris (Dog).